The chain runs to 615 residues: AP-1-like transcription factor yap1 (615 aa).

Polar residues predominate over residues 27–50; that stretch reads SSNNPTQKQQTVTHNSEANQNLNH. Disordered stretches follow at residues 27 to 84 and 99 to 180; these read SSNN…EDSP and NESL…RKEK. The short motif at 35-42 is the Bipartite nuclear localization signal element; the sequence is QQTVTHNS. The segment covering 52 to 67 has biased composition (low complexity); the sequence is PGHASSGSFSVSPPSG. The Bipartite nuclear localization signal signature appears at 68-75; that stretch reads LDGSVNQS. Basic and acidic residues predominate over residues 118 to 147; the sequence is PGDKRKDIDGQVNDKEDSGKKRRESDEKAA. The 64-residue stretch at 157–220 folds into the bZIP domain; sequence SEPTSKRKAQ…ERLQLELKEY (64 aa). The interval 162–183 is basic motif; it reads KRKAQNRAAQRAFRERKEKHLK. Residues 185-192 form a leucine-zipper region; it reads LEAKVEEL. The interval 214–364 is transcription activation 1; sequence QLELKEYRKR…RGYQVNSSYS (151 aa). A compositionally biased stretch (polar residues) spans 270 to 294; the sequence is LFTNTQTSKSNQNKAKDNPTATPRS. The disordered stretch occupies residues 270 to 416; sequence LFTNTQTSKS…AVKATESSTP (147 aa). The n-CRD stretch occupies residues 289–301; sequence TATPRSEAQVPGV. Residues 310–321 show a composition bias toward low complexity; sequence SSPNGLSNGPSP. 2 stretches are compositionally biased toward polar residues: residues 322–344 and 358–369; these read AKST…SGTL and QVNSSYSASTKQ. The segment covering 372–394 has biased composition (low complexity); it reads HDTPSSDSPSSSSDSHQSQLLSS. Positions 409-508 are transcription activation 2; it reads KATESSTPHA…SQDFGTFFDD (100 aa). Disulfide bonds link Cys-562-Cys-586, Cys-562-Cys-595, and Cys-586-Cys-595. The c-CRD stretch occupies residues 562-595; it reads CNKIWDRLQSMEKFRNGEIDVDNLCSELRTKARC. The short motif at 580-587 is the Nuclear export signal element; it reads IDVDNLCS.

This sequence belongs to the bZIP family. YAP subfamily. Depending on the oxidative stress inducing agent, yap1 can undergo two distinct conformational changes, both involving disulfide bond formation, and both masking the nuclear export signal, thus abolishing nuclear export.

The protein resides in the nucleus. Its subcellular location is the cytoplasm. Functionally, transcription activator involved in oxidative stress response and redox homeostasis. Regulates the transcription of genes encoding antioxidant enzymes and components of the cellular thiol-reducing pathways, including thioredoxin peroxidase (aspF3), cytochrome peroxidase, and the protein AFUA_3G00730, which appears to belong to the glutathione S-transferase family. Proteins of the protein degradation pathway are also regulated by yap1, as well the p-nitroreductase family protein AFUA_5G09910. May be involved in antifungal resistance to voriconazole. The chain is AP-1-like transcription factor yap1 from Aspergillus fumigatus (strain ATCC MYA-4609 / CBS 101355 / FGSC A1100 / Af293) (Neosartorya fumigata).